The chain runs to 184 residues: Probable RNA 2'-phosphotransferase (184 aa).

The protein belongs to the KptA/TPT1 family.

Removes the 2'-phosphate from RNA via an intermediate in which the phosphate is ADP-ribosylated by NAD followed by a presumed transesterification to release the RNA and generate ADP-ribose 1''-2''-cyclic phosphate (APPR&gt;P). May function as an ADP-ribosylase. This is Probable RNA 2'-phosphotransferase from Escherichia coli (strain K12 / MC4100 / BW2952).